We begin with the raw amino-acid sequence, 338 residues long: 1-aminocyclopropane-1-carboxylate deaminase (338 aa).

At Lys-51 the chain carries N6-(pyridoxal phosphate)lysine. Ser-78 acts as the Nucleophile in catalysis.

The protein belongs to the ACC deaminase/D-cysteine desulfhydrase family. As to quaternary structure, homotrimer. It depends on pyridoxal 5'-phosphate as a cofactor.

It carries out the reaction 1-aminocyclopropane-1-carboxylate + H2O = 2-oxobutanoate + NH4(+). Catalyzes a cyclopropane ring-opening reaction, the irreversible conversion of 1-aminocyclopropane-1-carboxylate (ACC) to ammonia and alpha-ketobutyrate. Allows growth on ACC as a nitrogen source. The sequence is that of 1-aminocyclopropane-1-carboxylate deaminase from Burkholderia pseudomallei (strain 1106a).